The chain runs to 226 residues: UPF0173 metal-dependent hydrolase Fnod_0635 (226 aa).

It belongs to the UPF0173 family.

This Fervidobacterium nodosum (strain ATCC 35602 / DSM 5306 / Rt17-B1) protein is UPF0173 metal-dependent hydrolase Fnod_0635.